The following is a 478-amino-acid chain: NADH-quinone oxidoreductase subunit N 1 (478 aa).

Helical transmembrane passes span Thr-6–Phe-26, Phe-33–Ala-53, Phe-71–Asn-91, Phe-99–Ser-119, Leu-121–Phe-141, Phe-156–Phe-176, Pro-193–Phe-212, Ile-244–Gln-264, Trp-265–Ile-285, Ile-299–Gly-319, Leu-321–Met-341, Phe-364–Phe-384, Phe-388–Ile-408, and Ala-438–Pro-458.

Belongs to the complex I subunit 2 family. NDH-1 is composed of 14 different subunits. Subunits NuoA, H, J, K, L, M, N constitute the membrane sector of the complex.

The protein localises to the cell inner membrane. The catalysed reaction is a quinone + NADH + 5 H(+)(in) = a quinol + NAD(+) + 4 H(+)(out). In terms of biological role, NDH-1 shuttles electrons from NADH, via FMN and iron-sulfur (Fe-S) centers, to quinones in the respiratory chain. The immediate electron acceptor for the enzyme in this species is believed to be ubiquinone. Couples the redox reaction to proton translocation (for every two electrons transferred, four hydrogen ions are translocated across the cytoplasmic membrane), and thus conserves the redox energy in a proton gradient. In Acidiphilium cryptum (strain JF-5), this protein is NADH-quinone oxidoreductase subunit N 1.